We begin with the raw amino-acid sequence, 370 residues long: 3-isopropylmalate dehydrogenase (370 aa).

77-90 (GPKWDSVPYEVRPE) is a binding site for NAD(+). Positions 97, 107, 135, and 226 each coordinate substrate. Residues D226, D250, and D254 each coordinate Mg(2+). 290–302 (GSAPDIAGKGIAN) provides a ligand contact to NAD(+).

The protein belongs to the isocitrate and isopropylmalate dehydrogenases family. LeuB type 1 subfamily. Homodimer. Mg(2+) is required as a cofactor. Requires Mn(2+) as cofactor.

Its subcellular location is the cytoplasm. It carries out the reaction (2R,3S)-3-isopropylmalate + NAD(+) = 4-methyl-2-oxopentanoate + CO2 + NADH. Its pathway is amino-acid biosynthesis; L-leucine biosynthesis; L-leucine from 3-methyl-2-oxobutanoate: step 3/4. Functionally, catalyzes the oxidation of 3-carboxy-2-hydroxy-4-methylpentanoate (3-isopropylmalate) to 3-carboxy-4-methyl-2-oxopentanoate. The product decarboxylates to 4-methyl-2 oxopentanoate. This chain is 3-isopropylmalate dehydrogenase, found in Rhizobium johnstonii (strain DSM 114642 / LMG 32736 / 3841) (Rhizobium leguminosarum bv. viciae).